The chain runs to 286 residues: Pantothenate synthetase (286 aa).

30-37 (MGALHEGH) is an ATP binding site. Catalysis depends on histidine 37, which acts as the Proton donor. A (R)-pantoate-binding site is contributed by glutamine 61. Glutamine 61 contacts beta-alanine. 147 to 150 (GEKD) contacts ATP. Glutamine 153 is a (R)-pantoate binding site. Residues leucine 176 and 184–187 (HSSR) contribute to the ATP site.

Belongs to the pantothenate synthetase family. As to quaternary structure, homodimer.

The protein localises to the cytoplasm. It catalyses the reaction (R)-pantoate + beta-alanine + ATP = (R)-pantothenate + AMP + diphosphate + H(+). The protein operates within cofactor biosynthesis; (R)-pantothenate biosynthesis; (R)-pantothenate from (R)-pantoate and beta-alanine: step 1/1. Its function is as follows. Catalyzes the condensation of pantoate with beta-alanine in an ATP-dependent reaction via a pantoyl-adenylate intermediate. This is Pantothenate synthetase from Bartonella tribocorum (strain CIP 105476 / IBS 506).